Here is a 681-residue protein sequence, read N- to C-terminus: Cell cycle checkpoint protein RAD17 (681 aa).

Residues 17–25 (DWVDPSFDD) carry the RAD1-binding motif motif. The segment at 42 to 61 (VNNSSHRRKNGPSTLESSRF) is disordered. Thr55 bears the Phosphothreonine mark. Phosphoserine occurs at positions 71 and 86. 137–144 (GPPGCGKT) contributes to the ATP binding site. Disordered stretches follow at residues 344 to 377 (SSKG…KPDR) and 606 to 681 (HGMI…SDGT). Ser359 carries the phosphoserine modification. Residues 432-681 (LVEPEEVVEM…IIEDYESDGT (250 aa)) are interaction with MCM7. Over residues 631–662 (EPTQATVPETWSLPLSQNSASELPASQPQPFS) the composition is skewed to polar residues. Thr633 carries the phosphothreonine; by ATM modification. Phosphoserine; by ATR and ATM occurs at positions 646 and 656. Over residues 666–681 (DMEENIIIEDYESDGT) the composition is skewed to acidic residues.

The protein belongs to the rad17/RAD24 family. Part of a DNA-binding complex containing RFC2, RFC3, RFC4 and RFC5. Interacts with RAD1 and RAD9 within the 9-1-1 (RAD1-RAD9-HUS1) complex. Interacts with RAD9B, POLE, SNU13 and MCM7. DNA damage promotes interaction with ATR or ATM and disrupts interaction with the 9-1-1 (RAD1-RAD9-HUS1) complex. Interacts (when phosphorylated) with NBN; promoting recruitment of the MRN complex to DNA damage sites. Post-translationally, phosphorylation on Ser-646 and Ser-656 is cell cycle-regulated, enhanced by genotoxic stress, and required for activation of checkpoint signaling. Phosphorylation is mediated by ATR upon UV or replication arrest, whereas it may be mediated both by ATR and ATM upon ionizing radiation. Phosphorylation on both sites is required for interaction with RAD1 but dispensable for interaction with RFC3 or RFC4. Phosphorylation at Thr-633 by ATM in response to DNA damage promotes interaction with NBN and recruitment of the MRN complex to DNA damage sites. In terms of tissue distribution, overexpressed in various cancer cell lines and in colon carcinoma (at protein level). Isoform 2 and isoform 3 are the most abundant isoforms in non irradiated cells (at protein level). Ubiquitous at low levels. Highly expressed in testis, where it is expressed within the germinal epithelium of the seminiferous tubuli. Weakly expressed in seminomas (testicular tumors).

The protein localises to the nucleus. The protein resides in the chromosome. In terms of biological role, essential for sustained cell growth, maintenance of chromosomal stability, and ATR-dependent checkpoint activation upon DNA damage. Has a weak ATPase activity required for binding to chromatin. Participates in the recruitment of the 9-1-1 (RAD1-RAD9-HUS1) complex and RHNO1 onto chromatin, and in CHEK1 activation. Involved in homologous recombination by mediating recruitment of the MRN complex to DNA damage sites. May also serve as a sensor of DNA replication progression. In Homo sapiens (Human), this protein is Cell cycle checkpoint protein RAD17.